A 228-amino-acid chain; its full sequence is MCADHGISSVLSLMQLVSSNFPVGSFAYSRGLEWAVENNWVNSVETFYSWQQQWIDGPLIYLEWPMLKRCYYYAQIRDEMNFFQCALRILSYRDTHELRLEERQRGKALSRIILQWYPFTDGGTWLSALEHSGLASIAWLGYTWSISLENLALGYAYNMLESATMAGLKLVPFGQITAQRLLRSLMERLPNDWKKSDMIADHELGNGFLLQSIASSCHETQYSRLFRS.

Belongs to the UreF family. In terms of assembly, ureD, UreF and UreG form a complex that acts as a GTP-hydrolysis-dependent molecular chaperone, activating the urease apoprotein by helping to assemble the nickel containing metallocenter of UreC. The UreE protein probably delivers the nickel.

It localises to the cytoplasm. In terms of biological role, required for maturation of urease via the functional incorporation of the urease nickel metallocenter. The polypeptide is Urease accessory protein UreF (Blochmanniella pennsylvanica (strain BPEN)).